The following is a 212-amino-acid chain: Ribosomal RNA large subunit methyltransferase E (212 aa).

S-adenosyl-L-methionine contacts are provided by Gly-57, Trp-59, Asp-77, Asp-93, and Asp-122. The active-site Proton acceptor is the Lys-162.

This sequence belongs to the class I-like SAM-binding methyltransferase superfamily. RNA methyltransferase RlmE family.

Its subcellular location is the cytoplasm. The catalysed reaction is uridine(2552) in 23S rRNA + S-adenosyl-L-methionine = 2'-O-methyluridine(2552) in 23S rRNA + S-adenosyl-L-homocysteine + H(+). Specifically methylates the uridine in position 2552 of 23S rRNA at the 2'-O position of the ribose in the fully assembled 50S ribosomal subunit. This chain is Ribosomal RNA large subunit methyltransferase E, found in Coxiella burnetii (strain RSA 493 / Nine Mile phase I).